A 506-amino-acid chain; its full sequence is tRNA-2-methylthio-N(6)-dimethylallyladenosine synthase (506 aa).

One can recognise an MTTase N-terminal domain in the interval 14–132 (KSYEVRTYGC…LPVLLERARV (119 aa)). Cysteine 23, cysteine 61, cysteine 95, cysteine 169, cysteine 173, and cysteine 176 together coordinate [4Fe-4S] cluster. Residues 155–386 (RESAYAAWVS…ALQEQISWDE (232 aa)) form the Radical SAM core domain. The TRAM domain maps to 388–456 (KKQVGRTLDV…PHHLLAEGTP (69 aa)).

The protein belongs to the methylthiotransferase family. MiaB subfamily. Monomer. Requires [4Fe-4S] cluster as cofactor.

It localises to the cytoplasm. It catalyses the reaction N(6)-dimethylallyladenosine(37) in tRNA + (sulfur carrier)-SH + AH2 + 2 S-adenosyl-L-methionine = 2-methylsulfanyl-N(6)-dimethylallyladenosine(37) in tRNA + (sulfur carrier)-H + 5'-deoxyadenosine + L-methionine + A + S-adenosyl-L-homocysteine + 2 H(+). Catalyzes the methylthiolation of N6-(dimethylallyl)adenosine (i(6)A), leading to the formation of 2-methylthio-N6-(dimethylallyl)adenosine (ms(2)i(6)A) at position 37 in tRNAs that read codons beginning with uridine. The chain is tRNA-2-methylthio-N(6)-dimethylallyladenosine synthase from Streptomyces griseus subsp. griseus (strain JCM 4626 / CBS 651.72 / NBRC 13350 / KCC S-0626 / ISP 5235).